The chain runs to 243 residues: Ribosomal RNA small subunit methyltransferase G (243 aa).

S-adenosyl-L-methionine is bound by residues Gly79, Phe84, 130–131 (AE), and Arg150. The tract at residues 222–243 (KPTPNKYPRKPGIPNKQPLGGA) is disordered.

Belongs to the methyltransferase superfamily. RNA methyltransferase RsmG family.

It localises to the cytoplasm. Its function is as follows. Specifically methylates the N7 position of a guanine in 16S rRNA. The chain is Ribosomal RNA small subunit methyltransferase G from Lacticaseibacillus paracasei (strain ATCC 334 / BCRC 17002 / CCUG 31169 / CIP 107868 / KCTC 3260 / NRRL B-441) (Lactobacillus paracasei).